Consider the following 380-residue polypeptide: Flap endonuclease 1 (380 aa).

Residues 1–104 (MGIQGLAKLI…GELAKRAERR (104 aa)) are N-domain. D34 serves as a coordination point for Mg(2+). 2 residues coordinate DNA: R47 and R70. Mg(2+)-binding residues include D86, E158, E160, D179, and D181. Residues 122–253 (DVNKFQKRLV…KRAIELIRQY (132 aa)) are I-domain. DNA is bound at residue E158. DNA is bound by residues G231 and D233. D233 contacts Mg(2+). The segment at 328–380 (LKNARHTSTQGRLDSFFKVMSSPSVKRKEPPKGAKGSASKKAKMSGGKFKKPK) is disordered. The tract at residues 336-344 (TQGRLDSFF) is interaction with PCNA. Residues 365 to 380 (ASKKAKMSGGKFKKPK) are compositionally biased toward basic residues.

The protein belongs to the XPG/RAD2 endonuclease family. FEN1 subfamily. As to quaternary structure, interacts with PCNA. Three molecules of FEN1 bind to one PCNA trimer with each molecule binding to one PCNA monomer. PCNA stimulates the nuclease activity without altering cleavage specificity. Mg(2+) is required as a cofactor. In terms of processing, phosphorylated. Phosphorylation upon DNA damage induces relocalization to the nuclear plasma.

The protein resides in the nucleus. It localises to the nucleolus. It is found in the nucleoplasm. Its subcellular location is the mitochondrion. In terms of biological role, structure-specific nuclease with 5'-flap endonuclease and 5'-3' exonuclease activities involved in DNA replication and repair. During DNA replication, cleaves the 5'-overhanging flap structure that is generated by displacement synthesis when DNA polymerase encounters the 5'-end of a downstream Okazaki fragment. It enters the flap from the 5'-end and then tracks to cleave the flap base, leaving a nick for ligation. Also involved in the long patch base excision repair (LP-BER) pathway, by cleaving within the apurinic/apyrimidinic (AP) site-terminated flap. Acts as a genome stabilization factor that prevents flaps from equilibrating into structures that lead to duplications and deletions. Also possesses 5'-3' exonuclease activity on nicked or gapped double-stranded DNA, and exhibits RNase H activity. Also involved in replication and repair of rDNA and in repairing mitochondrial DNA. This Branchiostoma floridae (Florida lancelet) protein is Flap endonuclease 1.